The following is a 423-amino-acid chain: Glutamate--cysteine ligase EgtA (423 aa).

This sequence belongs to the glutamate--cysteine ligase type 2 family. EgtA subfamily.

The enzyme catalyses L-cysteine + L-glutamate + ATP = gamma-L-glutamyl-L-cysteine + ADP + phosphate + H(+). Its pathway is amino-acid biosynthesis; ergothioneine biosynthesis. Functionally, catalyzes the synthesis of gamma-glutamylcysteine (gamma-GC). This compound is used as substrate for the biosynthesis of the low-molecular thiol compound ergothioneine. This is Glutamate--cysteine ligase EgtA from Mycolicibacterium smegmatis (strain ATCC 700084 / mc(2)155) (Mycobacterium smegmatis).